Reading from the N-terminus, the 81-residue chain is DNA-directed RNA polymerase subunit Rpo6 (81 aa).

The protein belongs to the archaeal Rpo6/eukaryotic RPB6 RNA polymerase subunit family. As to quaternary structure, part of the RNA polymerase complex.

The protein resides in the cytoplasm. It catalyses the reaction RNA(n) + a ribonucleoside 5'-triphosphate = RNA(n+1) + diphosphate. In terms of biological role, DNA-dependent RNA polymerase (RNAP) catalyzes the transcription of DNA into RNA using the four ribonucleoside triphosphates as substrates. This Thermofilum pendens (strain DSM 2475 / Hrk 5) protein is DNA-directed RNA polymerase subunit Rpo6.